We begin with the raw amino-acid sequence, 174 residues long: NADH-ubiquinone oxidoreductase chain 6 (174 aa).

The next 5 helical transmembrane spans lie at 1–21 (MTYVVFLLSVMFVMGFVGFSS), 24–44 (SPIYGGLGLIVSGGVGCGIVL), 46–66 (FGGSFLGLMMFLIYLGGMLVV), 86–106 (VMILGMFVLGVLMEVGLVVYM), and 151–171 (WLMVVAGWSLFVSIFIVIEIT).

The protein belongs to the complex I subunit 6 family. In terms of assembly, core subunit of respiratory chain NADH dehydrogenase (Complex I) which is composed of 45 different subunits.

It is found in the mitochondrion inner membrane. The catalysed reaction is a ubiquinone + NADH + 5 H(+)(in) = a ubiquinol + NAD(+) + 4 H(+)(out). Functionally, core subunit of the mitochondrial membrane respiratory chain NADH dehydrogenase (Complex I) which catalyzes electron transfer from NADH through the respiratory chain, using ubiquinone as an electron acceptor. Essential for the catalytic activity and assembly of complex I. The sequence is that of NADH-ubiquinone oxidoreductase chain 6 (MT-ND6) from Oryctolagus cuniculus (Rabbit).